The chain runs to 269 residues: MRIALGIEYDGSRYFGWQRQREVISVQAELEKALSRIANHPVSIQCAGRTDAGVHATGQVIHFDTHAIRSESAWTLGLNSNLPPDIAVRWVKEVDETFHARFSATARRYRYVIYNHNYRPAILGSGVSHYHETIDAALMHLAGQCLLGEQDFTSFRAIGCQSKTPWRNVTHLCVSRQGPYIVLDIRANAFLHHMVRNITGSLLLVGQGLKPVEWIAELLAAKDRNQAGPTAKAGGLYLVDVDYPAELALPQLPLGPLWLPDSAPGTTSF.

The active-site Nucleophile is aspartate 51. Position 109 (tyrosine 109) interacts with substrate.

The protein belongs to the tRNA pseudouridine synthase TruA family. As to quaternary structure, homodimer.

It carries out the reaction uridine(38/39/40) in tRNA = pseudouridine(38/39/40) in tRNA. In terms of biological role, formation of pseudouridine at positions 38, 39 and 40 in the anticodon stem and loop of transfer RNAs. In Aeromonas salmonicida (strain A449), this protein is tRNA pseudouridine synthase A.